A 283-amino-acid chain; its full sequence is Small ribosomal subunit protein uS3 (283 aa).

One can recognise a KH type-2 domain in the interval 39–107 (VRAYLKTKLK…PVHVNIEEIR (69 aa)). Residues 219–283 (ASDDDKKRRG…AAVSAEKAGE (65 aa)) form a disordered region. Over residues 221-236 (DDDKKRRGPRRDDGKP) the composition is skewed to basic and acidic residues. Over residues 237–260 (SGRPRAPRPEGQPGAAAPGSAPAA) the composition is skewed to low complexity.

The protein belongs to the universal ribosomal protein uS3 family. As to quaternary structure, part of the 30S ribosomal subunit. Forms a tight complex with proteins S10 and S14.

Functionally, binds the lower part of the 30S subunit head. Binds mRNA in the 70S ribosome, positioning it for translation. This chain is Small ribosomal subunit protein uS3, found in Janthinobacterium sp. (strain Marseille) (Minibacterium massiliensis).